Here is a 1125-residue protein sequence, read N- to C-terminus: Transient receptor potential cation channel subfamily A member 1 (1125 aa).

Residues 1-721 (MKRGLRRILL…KWCAYGFRAH (721 aa)) are Cytoplasmic-facing. ANK repeat units lie at residues 63–94 (ENLCPLHHAAAEGQVELMELIINGSSCEVLNI), 98–127 (YGNTPLHCAAEKNQVESVKFLLSQGANPNL), 131–161 (NMMSPLHIAVHGMYNEVIKVLTEHKATNINL), 165–194 (NGNTALMSTCAKDNSEALQILLEKGAKLCK), 198–227 (WGDYPVHQAAFSGAKKCMELILAYGEKNGY), 239–268 (KKASPLHLAVQSGDLDMIKMCLDNGAHIDM), 272–301 (AKCMALHFAATQGATDIVKLMISSYTGSSD), 309–338 (NQETLLHRASLFDHHDLAEYLISVGADINS), and 342–371 (EGRSPLILATASASWNIVNLLLCKGAKVDI). 5 disulfide bridges follow: C193–C666, C463–C666, C609–C622, C622–C666, and C634–C859. P395 is modified (4-hydroxyproline; transient). ANK repeat units lie at residues 413–442 (DGCTPLHYACRQGVPVSVNNLLGFNVSIHS), 446–475 (DKKSPLHFAASYGRINTCQRLLQDISDTRL), 482–511 (HGMTPLHLAAKNGHDKVVQLLLKKGALFLS), 514–543 (NGWTALHHASMGGYTQTMKVILDTNLKCTD), and 548–577 (EGNTALHFAAREGHAKAVAMLLSYNADILL). (E)-cinnamaldehyde is bound by residues C415 and C422. C622 lines the (E)-cinnamaldehyde pocket. C634 carries the post-translational modification Cysteine sulfenic acid (-SOH); transient; in hyperoxia. 3 residues coordinate (E)-cinnamaldehyde: C642, C666, and K712. Residues 722–742 (MMNLGSYCLGLIPMTLLVVKI) traverse the membrane as a helical segment. The Extracellular portion of the chain corresponds to 743–767 (QPGMAFNSTGIINGTSSTHEERIDT). N749 and N755 each carry an N-linked (GlcNAc...) asparagine glycan. A helical membrane pass occupies residues 768–788 (LNSFPIKICMILVFLSSIFGY). Topologically, residues 789–806 (CKEVIQIFQQKRNYFLDY) are cytoplasmic. Ca(2+)-binding residues include E791, Q794, N808, and E811. The chain crosses the membrane as a helical span at residues 807 to 827 (NNALEWVIYTTSIIFVLPLFL). The Extracellular segment spans residues 828–832 (NIPAY). Residues 833-853 (MQWQCGAIAIFFYWMNFLLYL) form a helical membrane-spanning segment. Residues 854–876 (QRFENCGIFIVMLEVIFKTLLRS) are Cytoplasmic-facing. At C859 the chain carries Cysteine sulfenic acid (-SOH); transient; in hyperoxia. A helical membrane pass occupies residues 877 to 897 (TGVFIFLLLAFGLSFYVLLNF). Residues 898–904 (QDAFSTP) are Extracellular-facing. Residues 905 to 925 (LLSLIQTFSMMLGDINYRDAF) constitute an intramembrane region (pore-forming). At 926–937 (LEPLFRNELAYP) the chain is on the extracellular side. Residues 938-959 (VLTFGQLIAFTMFVPIVLMNLL) form a helical membrane-spanning segment. Topologically, residues 960–1125 (IGLAVGDIAE…THCSISHPDF (166 aa)) are cytoplasmic. Residues 1044–1073 (MEILKQKYRLKDLTSLLEKQHELIKLIIQK) adopt a coiled-coil conformation. 1048 to 1054 (KQKYRLK) serves as a coordination point for a 1,2-diacyl-sn-glycero-3-phospho-(1D-myo-inositol).

Belongs to the transient receptor (TC 1.A.4) family. In terms of assembly, homotetramer. Interacts with TMEM100. Interacts with EGLN1. Interacts with the scorpion wasabi receptor toxin at the same site that electrophiles but in a non-covalent manner. Post-translationally, TRPA1 activation by electrophiles occurs though covalent modification of specific cysteine residues in the N-terminal cytoplasmic domain. In terms of processing, hydroxylation is required for TRPA1 activity inhibition in normoxia. In hypoxia, the decrease in oxygen concentration diminishes the activity of the hydroxylase EGLN1, thus relieving TRPA1 from inhibition and ultimately leading to channel activation. Oxidation of Cys-634 and Cys-859 in hyperoxia may override the hydroxylase EGLN1-mediated inhibition, causing TRPA1 activation. As to expression, expressed in inner ear (at protein level). Specifically expressed in a subset of nociceptive neurons. Expressed in the same neurons that TRPV1. In contrast, it is not expressed in neurons expressing TRPM8. Expressed in the superior cervical ganglion of vagus nerve. Expressed in the inferior ganglion (nodose ganglion) of vagus nerve. Expressed in dorsal root ganglia neurons.

The protein resides in the cell membrane. The catalysed reaction is Ca(2+)(in) = Ca(2+)(out). It catalyses the reaction Mg(2+)(in) = Mg(2+)(out). It carries out the reaction Na(+)(in) = Na(+)(out). The enzyme catalyses K(+)(in) = K(+)(out). The catalysed reaction is Zn(2+)(in) = Zn(2+)(out). Its activity is regulated as follows. Electrophilic ligands activate the channel by covalent modification of intracellular cysteines. Cys-622 plays a key role in covalent binding of electrophiles. Extracellular Ca(2+) both potentiates and inactivates TRPA1; a rapid potentiation follows by slow desensitization. Activated by increase in intracellular Ca(2+) concentration. Inhibited by the potent blocker of TRPV channels ruthenium red, A-967079. Activated by icilin, sulfhydryl reactive agent MTSEA, N-methyl maleimide (NMM), and PF-4840154. Also activated by hyperoxia. Activated by intracellular Zn(2+). TRPA1 activation may critically depend on the presence of small intracellular compounds such as polyphosphates. Ligand-activated Ca(2+)-permeable, nonselective cation channel. Involved in pain detection and possibly also in cold perception, oxygen concentration perception, cough, itch, and inner ear function. Has a relatively high Ca(2+) selectivity, with a preference for divalent over monovalent cations (Ca(2+) &gt; Ba(2+) &gt; Mg(2+) &gt; NH4(+) &gt; Li(+) &gt; K(+)), the influx of cation into the cytoplasm, leads to membrane depolarization. Has a central role in the pain response to endogenous inflammatory mediators, such as bradykinin and to a diverse array of irritants. Activated by a large variety of structurally unrelated electrophilic and non-electrophilic chemical compounds, such as allylthiocyanate (AITC) from mustard oil or wasabi, cinnamaldehyde, diallyl disulfide (DADS) from garlic, and acrolein, an environmental irritant. Electrophilic ligands activate TRPA1 by interacting with critical N-terminal Cys residues in a covalent manner. Non-electrophile agonists bind at distinct sites in the transmembrane domain to promote channel activation. Also acts as an ionotropic cannabinoid receptor by being activated by delta(9)-tetrahydrocannabinol (THC), the psychoactive component of marijuana. May be a component for the mechanosensitive transduction channel of hair cells in inner ear, thereby participating in the perception of sounds. The protein is Transient receptor potential cation channel subfamily A member 1 of Mus musculus (Mouse).